A 534-amino-acid chain; its full sequence is MAAKYIFVTGGVVSSLGKGITAASLGRLLKNRGLKVTIQKFDPYINVDPGTMSPYQHGEVFVTDDGAETDLDLGHYERFIDINLSQNSNITTGRVYSTVLKKERRGDYLGGTVQVIPHVTNEIKERVFRAGRETGADVVITEIGGTVGDIESLPFLEAIRQIKSDVGMENVLYLHCTLIPYLKAAGEMKSKPTQHSVKELRSLGIQPNVIVVRTERKVPQDMKDKIALFCDIKKEAVIEAWDADTLYQVPLDLQAQNLDQIVCDHLQLNCPEANMTEWKELVNRVSHLSEKVRIAIVGKYVELQDAYLSVAEALRHAGYHVDADIDIDWVYAEQVNDENVDELLNKADGILVPGGFGDRGIEGKITAIRYARENKVPFLGICLGMQLASVEFARTVLGLKGANSAELNPQTPYPIIDLLPEQKDVEDLGGTLRLGLYPCKLQEGTAARAAYGEEVVYERHRHRYEFNNEYREQMEKAGFVFSGTSPDGRLVEVIEVTDHPFFVASQFHPEFVSRPTRPQPLFREFVRNALAAQA.

Residues 1–268 form an amidoligase domain region; sequence MAAKYIFVTG…DQIVCDHLQL (268 aa). Residue Ser-14 participates in CTP binding. UTP is bound at residue Ser-14. Residue 15–20 coordinates ATP; the sequence is SLGKGI. Residue Tyr-55 coordinates L-glutamine. Residue Asp-72 participates in ATP binding. The Mg(2+) site is built by Asp-72 and Glu-142. Residues 149-151, 189-194, and Lys-225 each bind CTP; these read DIE and KSKPTQ. UTP contacts are provided by residues 189 to 194 and Lys-225; that span reads KSKPTQ. The 242-residue stretch at 293–534 folds into the Glutamine amidotransferase type-1 domain; the sequence is RIAIVGKYVE…FVRNALAAQA (242 aa). Residue Gly-355 participates in L-glutamine binding. Catalysis depends on Cys-382, which acts as the Nucleophile; for glutamine hydrolysis. L-glutamine-binding positions include 383 to 386, Glu-406, and Arg-463; that span reads LGMQ. Catalysis depends on residues His-508 and Glu-510.

This sequence belongs to the CTP synthase family. Homotetramer.

It catalyses the reaction UTP + L-glutamine + ATP + H2O = CTP + L-glutamate + ADP + phosphate + 2 H(+). The catalysed reaction is L-glutamine + H2O = L-glutamate + NH4(+). The enzyme catalyses UTP + NH4(+) + ATP = CTP + ADP + phosphate + 2 H(+). It participates in pyrimidine metabolism; CTP biosynthesis via de novo pathway; CTP from UDP: step 2/2. With respect to regulation, allosterically activated by GTP, when glutamine is the substrate; GTP has no effect on the reaction when ammonia is the substrate. The allosteric effector GTP functions by stabilizing the protein conformation that binds the tetrahedral intermediate(s) formed during glutamine hydrolysis. Inhibited by the product CTP, via allosteric rather than competitive inhibition. In terms of biological role, catalyzes the ATP-dependent amination of UTP to CTP with either L-glutamine or ammonia as the source of nitrogen. Regulates intracellular CTP levels through interactions with the four ribonucleotide triphosphates. The protein is CTP synthase of Shouchella clausii (strain KSM-K16) (Alkalihalobacillus clausii).